We begin with the raw amino-acid sequence, 31 residues long: Toxin BmKK16 (31 aa).

Position 1 is a pyrrolidone carboxylic acid (Gln-1). 3 disulfides stabilise this stretch: Cys-4/Cys-20, Cys-10/Cys-25, and Cys-14/Cys-27. Residue Pro-31 is modified to Proline amide.

This sequence belongs to the short scorpion toxin superfamily. Potassium channel inhibitor family. Alpha-KTx 17 subfamily. The N-terminus is blocked. In terms of tissue distribution, expressed by the venom gland.

The protein resides in the secreted. Functionally, blocker of potassium channels (Kv). In Olivierus martensii (Manchurian scorpion), this protein is Toxin BmKK16.